Here is a 246-residue protein sequence, read N- to C-terminus: Acetoacetate decarboxylase (246 aa).

The active-site Schiff-base intermediate with acetoacetate is the Lys116.

It belongs to the ADC family.

It carries out the reaction acetoacetate + H(+) = acetone + CO2. Its function is as follows. Catalyzes the conversion of acetoacetate to acetone and carbon dioxide. The chain is Acetoacetate decarboxylase from Burkholderia mallei (strain NCTC 10247).